The primary structure comprises 192 residues: Potassium channel HX13_20290 (192 aa).

The helical transmembrane segment at 1 to 24 (MTKGRLEAFSDGVLAIIITIMVLE) threads the bilayer. A RxxxFSD motif motif is present at residues 5-11 (RLEAFSD). Position 25 (L25) is a topological domain, cytoplasmic. The segment at 26–29 (KVPE) is short helix H1. The Extracellular portion of the chain corresponds to 26-39 (KVPEGSSWASLQPI). Residues 31-37 (SSWASLQ) form a short helix H2 region. A helical transmembrane segment spans residues 40–65 (LPRFLAYIFSFIYVGIYWNNHHHLFQ). At 66–71 (TVKKVN) the chain is on the cytoplasmic side. Residues 72-93 (GSILWANLHLLFWLSLMPIATE) form a helical membrane-spanning segment. Topologically, residues 94 to 101 (WIGTSHFA) are extracellular. A helical transmembrane segment spans residues 102 to 126 (QNPVATYGIGLIMSAIAYTILENVI). Residues 127 to 133 (IRCEGEN) are Cytoplasmic-facing. Residues 134-162 (SKLKEAIHSKFKEYISIIFYVLGIATSFF) traverse the membrane as a helical segment. Residues 163–164 (YP) are Extracellular-facing. Residues 165 to 180 (YIAIGFYYLVALIWLI) form a helical membrane-spanning segment. Residues 181–192 (PDKRIEKSLKEN) are Cytoplasmic-facing.

The protein belongs to the TMEM175 family. As to quaternary structure, homotetramer.

The protein localises to the membrane. The catalysed reaction is K(+)(in) = K(+)(out). Potassium channel. The chain is Potassium channel HX13_20290 from Chryseobacterium sp. (strain P1-3).